The following is a 309-amino-acid chain: MDAKTAQSIFGGIVAAKKRPSKEVPEPTINFKSANDSLVKKNLLLKQQVVQCTKTIEKLRNENVALRQKNQELIDGTLEQRIELIVEQRLKFRLAHAAVLHKKLVQNIQQTGLELDGLFKDLEPEPSGLNTRRPPKLELNLERVDEIPFCQSSMQGEIDENEIRFDNNSSQSTSSIQNAVNGTPRKKQSVGKGRRSELFQSFNADSSIVEEASTIPTNRRAPMLIAPSSTPAGPSKPTARKPPTPRFKKPSTPALAPQSDDTELSSTIQVRRQRSAKMNIKSLKEPSGKDKLRRPGKHDEPMPYINTFF.

Residues 42-77 adopt a coiled-coil conformation; sequence NLLLKQQVVQCTKTIEKLRNENVALRQKNQELIDGT. Disordered stretches follow at residues 165-195 and 210-309; these read FDNN…KGRR and EEAS…NTFF. Residues 167–178 are compositionally biased toward low complexity; the sequence is NNSSQSTSSIQN. Residues 184–193 are compositionally biased toward basic residues; sequence PRKKQSVGKG.

This sequence belongs to the shugoshin family. In terms of tissue distribution, expressed in gonads.

It localises to the nucleus. Its subcellular location is the chromosome. The protein resides in the centromere. Functionally, component of cell cycle checkpoints, which ensures chromosome segregation during meiosis and mitosis. During meiotic prophase, it is involved in the regulation of the synapsis checkpoint, which monitors whether homologous chromosomes have synapsed, and the DNA damage response. Plays a central role in chromosome cohesion during cell division by preventing premature dissociation of cohesin complex after prophase, when most of cohesin complex dissociates from chromosomes arms. In Caenorhabditis elegans, this protein is Shugoshin.